Consider the following 246-residue polypeptide: Probable transcriptional regulatory protein RB5500 (246 aa).

This sequence belongs to the TACO1 family.

The protein resides in the cytoplasm. The chain is Probable transcriptional regulatory protein RB5500 from Rhodopirellula baltica (strain DSM 10527 / NCIMB 13988 / SH1).